Consider the following 620-residue polypeptide: Threonine--tRNA ligase (620 aa).

The tract at residues 1 to 141 is editing domain; it reads MKMLLIHSDY…LSRKIVAKEE (141 aa). Residues 197 to 496 are catalytic; it reads PHVKFIKEKD…AEKGNAPMLP (300 aa). The Zn(2+) site is built by Cys289, His341, and His465.

Belongs to the class-II aminoacyl-tRNA synthetase family. As to quaternary structure, homodimer. It depends on Zn(2+) as a cofactor.

It localises to the cytoplasm. It carries out the reaction tRNA(Thr) + L-threonine + ATP = L-threonyl-tRNA(Thr) + AMP + diphosphate + H(+). Its activity is regulated as follows. Not inhibited by 1 uM borrelidin (BN); probably does not bind BN. Its function is as follows. Catalyzes the attachment of threonine to tRNA(Thr) in a two-step reaction: L-threonine is first activated by ATP to form Thr-AMP and then transferred to the acceptor end of tRNA(Thr). Also activates L-serine, but does not detectably transfer it to tRNA(Thr). Edits incorrectly charged L-seryl-tRNA(Thr) via its editing domain. Has no activity on correctly acylated L-seryl-tRNA(Ser) or L-threonyl-tRNA(Thr). Deacylates correctly charged glycyl-tRNA(Gly), but not glycyl-tRNA(Gly)(2'-dA76) (the terminal 2'-OH of tRNA adenine 76 has been dehydroxylated) nor the 2'-fluoro tRNA derivative, strongly suggesting the editing function is tRNA catalyzed. In Methanocaldococcus jannaschii (strain ATCC 43067 / DSM 2661 / JAL-1 / JCM 10045 / NBRC 100440) (Methanococcus jannaschii), this protein is Threonine--tRNA ligase.